The chain runs to 227 residues: AN1-type zinc finger protein 3 (227 aa).

Residues proline 12–proline 44 form an A20-type zinc finger. 4 residues coordinate Zn(2+): cysteine 18, cysteine 20, cysteine 32, and cysteine 35. Positions lysine 41–glutamine 151 are disordered. Composition is skewed to low complexity over residues threonine 49 to leucine 59 and serine 66 to threonine 77. Composition is skewed to polar residues over residues leucine 78–proline 94 and isoleucine 111–glutamate 127. Residues arginine 135 to arginine 148 show a composition bias toward basic and acidic residues. Residues glutamine 151–glycine 200 form an AN1-type zinc finger. 8 residues coordinate Zn(2+): cysteine 157, cysteine 160, cysteine 174, cysteine 176, cysteine 181, histidine 184, histidine 190, and cysteine 192.

The chain is AN1-type zinc finger protein 3 (Zfand3) from Rattus norvegicus (Rat).